The primary structure comprises 593 residues: Numb-related protein 1 (593 aa).

Disordered stretches follow at residues Met1 to Asp97, Thr235 to Ser278, Leu331 to Gln375, and Met493 to Asp581. Phosphoserine; by PKC is present on Ser17. The segment covering Gln27–Ser37 has biased composition (polar residues). The span at Arg64–Asp74 shows a compositional bias: basic residues. The residue at position 65 (Ser65) is a Phosphoserine; by PKC. The region spanning Arg102–Ile255 is the PID domain. 3 stretches are compositionally biased toward polar residues: residues Ala236–Pro251, Glu261–Ser278, and Ser354–Glu364. The segment covering Met493–Ser511 has biased composition (low complexity). Pro residues predominate over residues Ser516–Pro528. A compositionally biased stretch (polar residues) spans Ala532–Asn565.

Interacts with pkc-3. As to expression, expressed in cells comprising the intestine, pharyngeal cells, the anal sphincter and depressor muscles.

It localises to the cytoplasm. The protein resides in the cell cortex. It is found in the cytoskeleton. The protein localises to the membrane. Functionally, involved in the tethering and targeting of pkc-3 to modulate the intracellular distribution of the kinase. The complex formed with pkc-3 complexes are likely to be involved in assembly, maintenance, and/or regulation of protein complexes that execute asymmetric and/or polarized cell functions. The sequence is that of Numb-related protein 1 from Caenorhabditis elegans.